The following is a 177-amino-acid chain: MRPSRSTRRHLISLLLFLFHSETACRPSGKRPCRMQAFRIWDVNQKTFYLRNNQLVAGYLQGPNAKLEERIDVVPLEPQLLFLGIQRGKLCLSCVKSGDKMKLHLEAVNITDLGKNKEQDKRFTFIRSNSGPTTTFESASCPGWFLCTALEADQPVSLTNTPDDSIVVTKFYFQEDQ.

The signal sequence occupies residues 1-25 (MRPSRSTRRHLISLLLFLFHSETAC). A disulfide bond links Cys91 and Cys141. Residue Asn109 is glycosylated (N-linked (GlcNAc...) asparagine).

The protein belongs to the IL-1 family.

It localises to the secreted. Functionally, anti-inflammatory antagonist of interleukin-1 family of proinflammatory cytokines such as interleukin-1beta/IL1B and interleukin-1alpha/IL1A. Protects from immune dysregulation and uncontrolled systemic inflammation triggered by IL1 for a range of innate stimulatory agents such as pathogens. This is Interleukin-1 receptor antagonist protein (IL1RN) from Oryctolagus cuniculus (Rabbit).